A 141-amino-acid chain; its full sequence is Deoxyuridine 5'-triphosphate nucleotidohydrolase (141 aa).

The protein belongs to the dUTPase family. Mg(2+) serves as cofactor.

The enzyme catalyses dUTP + H2O = dUMP + diphosphate + H(+). It participates in pyrimidine metabolism; dUMP biosynthesis; dUMP from dCTP (dUTP route): step 2/2. Functionally, this enzyme is involved in nucleotide metabolism: it produces dUMP, the immediate precursor of thymidine nucleotides and it decreases the intracellular concentration of dUTP so that uracil cannot be incorporated into DNA. The polypeptide is Deoxyuridine 5'-triphosphate nucleotidohydrolase (Chlorella (PBCV-1)).